The chain runs to 125 residues: Acidic phospholipase A2 HTe (125 aa).

Intrachain disulfides connect Cys-11-Cys-77, Cys-27-Cys-124, Cys-29-Cys-45, Cys-44-Cys-105, Cys-51-Cys-98, Cys-61-Cys-91, and Cys-84-Cys-96. Residues Tyr-28, Gly-30, and Gly-32 each coordinate Ca(2+). The active site involves His-48. Asp-49 provides a ligand contact to Ca(2+). The active site involves Asp-99.

Belongs to the phospholipase A2 family. Group I subfamily. D49 sub-subfamily. Ca(2+) is required as a cofactor. In terms of processing, no glycosylation was detected on this protein. As to expression, expressed by the venom gland.

Its subcellular location is the secreted. The catalysed reaction is a 1,2-diacyl-sn-glycero-3-phosphocholine + H2O = a 1-acyl-sn-glycero-3-phosphocholine + a fatty acid + H(+). Functionally, snake venom phospholipase A2 (PLA2) that blocks neuromuscular transmission, but that does not produce blockade by virtue of a selective action on nerve endings. Instead, the toxin acts both on nerve and on muscle. PLA2 catalyzes the calcium-dependent hydrolysis of the 2-acyl groups in 3-sn-phosphoglycerides. The chain is Acidic phospholipase A2 HTe from Notechis scutatus scutatus (Mainland tiger snake).